Reading from the N-terminus, the 436-residue chain is Phosphomethylpyrimidine synthase (436 aa).

Residues Asn-68, Met-97, Tyr-126, His-166, 188-190 (SRG), 229-232 (DGFR), and Glu-268 contribute to the substrate site. Residue His-272 participates in Zn(2+) binding. Tyr-295 lines the substrate pocket. His-336 is a binding site for Zn(2+). [4Fe-4S] cluster contacts are provided by Cys-412, Cys-415, and Cys-419.

The protein belongs to the ThiC family. In terms of assembly, homodimer. It depends on [4Fe-4S] cluster as a cofactor.

It carries out the reaction 5-amino-1-(5-phospho-beta-D-ribosyl)imidazole + S-adenosyl-L-methionine = 4-amino-2-methyl-5-(phosphooxymethyl)pyrimidine + CO + 5'-deoxyadenosine + formate + L-methionine + 3 H(+). It participates in cofactor biosynthesis; thiamine diphosphate biosynthesis. Catalyzes the synthesis of the hydroxymethylpyrimidine phosphate (HMP-P) moiety of thiamine from aminoimidazole ribotide (AIR) in a radical S-adenosyl-L-methionine (SAM)-dependent reaction. This chain is Phosphomethylpyrimidine synthase, found in Geobacter metallireducens (strain ATCC 53774 / DSM 7210 / GS-15).